We begin with the raw amino-acid sequence, 267 residues long: DNA repair protein RecO (267 aa).

The protein belongs to the RecO family.

Involved in DNA repair and RecF pathway recombination. In Prochlorococcus marinus (strain MIT 9303), this protein is DNA repair protein RecO.